Here is a 308-residue protein sequence, read N- to C-terminus: UDP-N-acetylenolpyruvoylglucosamine reductase (308 aa).

Residues 24-187 (RVGGPADWLF…VSASLQGVPG (164 aa)) enclose the FAD-binding PCMH-type domain. Arg-167 is an active-site residue. The tract at residues 199 to 230 (QLDKRDQTQPTKERSAGSTFRNPAGFSSTGRA) is disordered. A compositionally biased stretch (basic and acidic residues) spans 200-213 (LDKRDQTQPTKERS). The span at 214–228 (AGSTFRNPAGFSSTG) shows a compositional bias: polar residues. Catalysis depends on Ser-216, which acts as the Proton donor. Residue Glu-298 is part of the active site.

The protein belongs to the MurB family. Requires FAD as cofactor.

The protein resides in the cytoplasm. It carries out the reaction UDP-N-acetyl-alpha-D-muramate + NADP(+) = UDP-N-acetyl-3-O-(1-carboxyvinyl)-alpha-D-glucosamine + NADPH + H(+). The protein operates within cell wall biogenesis; peptidoglycan biosynthesis. In terms of biological role, cell wall formation. The polypeptide is UDP-N-acetylenolpyruvoylglucosamine reductase (Ruegeria pomeroyi (strain ATCC 700808 / DSM 15171 / DSS-3) (Silicibacter pomeroyi)).